The following is a 411-amino-acid chain: 2,3-bisphosphoglycerate-independent phosphoglycerate mutase (411 aa).

It belongs to the BPG-independent phosphoglycerate mutase family. A-PGAM subfamily.

The catalysed reaction is (2R)-2-phosphoglycerate = (2R)-3-phosphoglycerate. It participates in carbohydrate degradation; glycolysis; pyruvate from D-glyceraldehyde 3-phosphate: step 3/5. In terms of biological role, catalyzes the interconversion of 2-phosphoglycerate and 3-phosphoglycerate. This Pyrobaculum islandicum (strain DSM 4184 / JCM 9189 / GEO3) protein is 2,3-bisphosphoglycerate-independent phosphoglycerate mutase.